Here is a 143-residue protein sequence, read N- to C-terminus: Competence protein ComGD (143 aa).

Positions 1 to 10 (MNIKLNEEKG) are excised as a propeptide. N-methylphenylalanine is present on Phe11. A helical membrane pass occupies residues 11–31 (FTLLESLLVLSLASILLVAVF).

In terms of assembly, the transformation pili are flexible filaments, consisting mainly of the major pilin ComGC and smaller amounts of the minor pilins, including at least ComGD, ComGF and ComGG. Interacts with ComGF. Interacts with ComGG. In terms of processing, processing of ComGD in competent cells requires ComC.

It is found in the cell membrane. It localises to the cell surface. In terms of biological role, required for formation of the type IV-like pilus (T4P) that plays a role in transformation. Transformation pili are dynamically extended and retracted, perhaps thereby promoting DNA uptake and transformation. Required for transformation and DNA binding. The polypeptide is Competence protein ComGD (comGD) (Bacillus subtilis (strain 168)).